The sequence spans 175 residues: Putative lipoprotein LppP (175 aa).

Positions 1-30 (MRRQRSAVPILALLALLALLALIVGLGASG) are cleaved as a signal peptide. A lipid anchor (N-palmitoyl cysteine) is attached at C31. The S-diacylglycerol cysteine moiety is linked to residue C31.

Its subcellular location is the cell membrane. This Mycobacterium bovis (strain ATCC BAA-935 / AF2122/97) protein is Putative lipoprotein LppP (lppP).